The chain runs to 610 residues: Lipoprotein LpqB (610 aa).

Positions 1–27 (MGAEGGGRRRALRLGAYVGCGAVLLTG) are cleaved as a signal peptide. A lipid anchor (N-palmitoyl cysteine) is attached at Cys-28. The S-diacylglycerol cysteine moiety is linked to residue Cys-28.

This sequence belongs to the LpqB lipoprotein family.

It localises to the cell membrane. In Streptomyces avermitilis (strain ATCC 31267 / DSM 46492 / JCM 5070 / NBRC 14893 / NCIMB 12804 / NRRL 8165 / MA-4680), this protein is Lipoprotein LpqB.